The sequence spans 137 residues: BolA-like protein 1 (137 aa).

The residue at position 81 (Ser81) is a Phosphoserine. The segment at 114-137 (WGENSQLDTSPPCLGGNKKTLGTP) is disordered.

The protein belongs to the BolA/IbaG family. Interacts with GLRX5.

Its subcellular location is the mitochondrion. Its function is as follows. Acts as a mitochondrial iron-sulfur (Fe-S) cluster assembly factor that facilitates (Fe-S) cluster insertion into a subset of mitochondrial proteins. Probably acts together with the monothiol glutaredoxin GLRX5. May protect cells against oxidative stress. The polypeptide is BolA-like protein 1 (BOLA1) (Pongo abelii (Sumatran orangutan)).